Reading from the N-terminus, the 504-residue chain is MKNEKRKTGIEPKVFFPPLIIVGILCWLTVRDLDAANVVINAVFSYVTNVWGWAFEWYMVVMLFGWFWLVFGPYAKKRLGNEPPEFSTASWIFMMFASCTSAAVLFWGSIEIYYYISTPPFGLEPNSTGAKELGLAYSLFLWGPLPWATYSFLSVAFAYFFFVRKMEVIRPSSTLVPLVGEKHAKGLFGTIVDNFYLVALIFAMGTSLGLATPLVTECMQWLFGIPHTLQLDAIIITCWIILNAICVACGLQKGVRIASDVRSYLSFLMLGWVFIVSGASFIMNYFTDSVGMLLMYLPRMLFYTDPIAKGGFPQGWTVFYWAWWVIYAIQMSIFLARISRGRTVRELCFGMVMGLTASTWILWTVLGSNTLLLIDKNIINIPNLIEQYGVARAIIETWAALPLSTATMWGFFILCFIATVTLVNACSYTLAMSTCREVRDGEEPPLLVRIGWSILVGIIGIVLLALGGLKPIQTAIIAGGCPLFFVNIMVTLSFIKDAKQNWKD.

The next 12 membrane-spanning stretches (helical) occupy residues 10-30 (IEPK…WLTV), 51-71 (WGWA…WLVF), 92-112 (IFMM…SIEI), 143-163 (GPLP…FFFV), 195-215 (FYLV…TPLV), 231-251 (LDAI…ACGL), 263-283 (SYLS…SFIM), 316-336 (WTVF…IFLA), 347-367 (LCFG…TVLG), 398-418 (WAAL…CFIA), 446-466 (LLVR…LLAL), and 475-495 (AIIA…LSFI).

It belongs to the BCCT transporter (TC 2.A.15) family. CaiT subfamily. Homotrimer.

Its subcellular location is the cell inner membrane. The enzyme catalyses 4-(trimethylamino)butanoate(in) + (R)-carnitine(out) = 4-(trimethylamino)butanoate(out) + (R)-carnitine(in). The protein operates within amine and polyamine metabolism; carnitine metabolism. Catalyzes the exchange of L-carnitine for gamma-butyrobetaine. The sequence is that of L-carnitine/gamma-butyrobetaine antiporter from Escherichia coli O157:H7.